A 478-amino-acid polypeptide reads, in one-letter code: Poly(A) RNA polymerase cid11 (478 aa).

Positions 106 and 108 each coordinate Mg(2+). Residues S263 to T317 enclose the PAP-associated domain. A disordered region spans residues Q428 to T447.

It belongs to the DNA polymerase type-B-like family. Mg(2+) serves as cofactor. The cofactor is Mn(2+).

The protein localises to the cytoplasm. Its subcellular location is the nucleus. The catalysed reaction is RNA(n) + ATP = RNA(n)-3'-adenine ribonucleotide + diphosphate. The polypeptide is Poly(A) RNA polymerase cid11 (cid11) (Schizosaccharomyces pombe (strain 972 / ATCC 24843) (Fission yeast)).